A 458-amino-acid polypeptide reads, in one-letter code: Sphingoid long chain base kinase 4 (458 aa).

The DAGKc domain maps to 103–241; it reads KRSRRFIVFI…FDLMTFEQKG (139 aa). ATP contacts are provided by residues 113–115 and Thr-145; that span reads NPH. 170 to 173 contributes to the substrate binding site; the sequence is GGDG. Asp-172 serves as the catalytic Proton donor/acceptor. Residues Glu-177, 202 to 204, Arg-266, Arg-272, and 426 to 428 contribute to the ATP site; these read GSG and DGE.

It localises to the cell membrane. The protein localises to the endoplasmic reticulum membrane. It is found in the late endosome membrane. Its subcellular location is the golgi apparatus membrane. The enzyme catalyses a sphingoid base + ATP = a sphingoid 1-phosphate + ADP + H(+). Its function is as follows. Catalyzes the phosphorylation of the sphingoid long chain bases dihydrosphingosine (DHS) and phytosphingosine (PHS) to form dihydrosphingosine 1-phosphate (DHS-1P) and phytosphingosine 1-phosphate (PHS-1P) respectively. Involved in the biosynthesis of sphingolipids and ceramides. Involved in heat-induced transient cell cycle arrest. Accumulation of phosphorylated sphingoid long chain bases (LCBPs) stimulates calcium influx and activates calcineurin signaling. Involved in heat-stress resistance. This chain is Sphingoid long chain base kinase 4 (lcb4), found in Schizosaccharomyces pombe (strain 972 / ATCC 24843) (Fission yeast).